Here is a 379-residue protein sequence, read N- to C-terminus: MASHPTLKTTFAARSEATTHPLTSYLLRLMDLKASNLCLSADVPTARELLYLADKIGPSIVVLKTHYDMVSGWDFHPDTGTGAKLASLARKHGFLIFEDRKFGDIGHTVELQYTSGSARIIDWAHIVNVNMVPGKASVASLAQGARRWLERYPCEVKTSVTVGTPTMDQFDDAEDAKDDEPATVNDNGSNMMEKPIYAGRNGDGRKGSIVSITTVTQQYESAASPRLGKTIAEGDESLFPGIEEAPLNRGLLILAQMSSEGNFMTGEYTQACVEAAREHKDFVMGFISQEALNTQADDDFIHMTPGCQLPPEDEDQQTNGKVGGDGQGQQYNTAHKIIGIAGSDIAIVGRGILKASDPVEEAERYRSAAWKAYTERLLR.

Residues Asp-42, 64-66 (KTH), and 99-108 (DRKFGDIGHT) each bind substrate. The Proton donor role is filled by Lys-101. The tract at residues 165-198 (PTMDQFDDAEDAKDDEPATVNDNGSNMMEKPIYA) is disordered. A compositionally biased stretch (acidic residues) spans 169–178 (QFDDAEDAKD). Tyr-331 and Arg-350 together coordinate substrate.

This sequence belongs to the OMP decarboxylase family.

It carries out the reaction orotidine 5'-phosphate + H(+) = UMP + CO2. It functions in the pathway pyrimidine metabolism; UMP biosynthesis via de novo pathway; UMP from orotate: step 2/2. The chain is Orotidine 5'-phosphate decarboxylase (pyr4) from Hypocrea atroviridis (Trichoderma atroviride).